A 207-amino-acid chain; its full sequence is CASP-like protein 1D1 (207 aa).

At 1 to 40 (MATVDGTTAPSSGGKTATVALESGGGRYGGPAPAKCSGAN) the chain is on the cytoplasmic side. A helical transmembrane segment spans residues 41-61 (LALRALLFAVSLSALVVLVTA). Residues 62–89 (KQTVMVPFVIRPPQFILAPVPAKYTHSP) are Extracellular-facing. A helical membrane pass occupies residues 90–110 (ALIYLLAALCATCFYSLITAI). Over 111–124 (SSVRLLSSSACSAK) the chain is Cytoplasmic. A helical membrane pass occupies residues 125 to 145 (TLFYLILLDVFYAAVMASATG). The Extracellular portion of the chain corresponds to 146 to 176 (TAGAVAWVGLKGNSHTRWNKICNVYGKFCRH). Residues 177–197 (IGSSTFLALIAAIVLVLLAFL) traverse the membrane as a helical segment. The Cytoplasmic portion of the chain corresponds to 198-207 (NAYSLYRRSR).

It belongs to the Casparian strip membrane proteins (CASP) family. As to quaternary structure, homodimer and heterodimers.

Its subcellular location is the cell membrane. The chain is CASP-like protein 1D1 from Oryza sativa subsp. japonica (Rice).